The following is a 143-amino-acid chain: Transcriptional regulator MraZ (143 aa).

SpoVT-AbrB domains follow at residues 5–47 (EFLH…PMDE) and 76–119 (AIEC…ANDA).

This sequence belongs to the MraZ family. Forms oligomers.

It localises to the cytoplasm. The protein localises to the nucleoid. The polypeptide is Transcriptional regulator MraZ (Oceanobacillus iheyensis (strain DSM 14371 / CIP 107618 / JCM 11309 / KCTC 3954 / HTE831)).